The sequence spans 124 residues: Histone H2B 1/2 (124 aa).

Residues 1–32 form a disordered region; it reads MPEPAKAAPKKGSKKAVTKTAGKGGKKRKRTR. Lys6 and Lys11 each carry N6-acetyllysine. Over residues 8–17 the composition is skewed to basic residues; sequence APKKGSKKAV. A Phosphoserine modification is found at Ser13. An N6-acetyllysine mark is found at Lys14 and Lys19. Ser111 is a glycosylation site (O-linked (GlcNAc) serine). A Glycyl lysine isopeptide (Lys-Gly) (interchain with G-Cter in ubiquitin) cross-link involves residue Lys119.

It belongs to the histone H2B family. The nucleosome is a histone octamer containing two molecules each of H2A, H2B, H3 and H4 assembled in one H3-H4 heterotetramer and two H2A-H2B heterodimers. The octamer wraps approximately 147 bp of DNA. In terms of processing, monoubiquitination of Lys-119 by the BRE1 gives a specific tag for epigenetic transcriptional activation and is also prerequisite for histone H3 'Lys-4' and 'Lys-79' methylation. Post-translationally, phosphorylated during apoptosis; which facilitates apoptotic chromatin condensation. GlcNAcylation at Ser-111 promotes monoubiquitination of Lys-119. It fluctuates in response to extracellular glucose, and associates with transcribed genes.

It is found in the nucleus. Its subcellular location is the chromosome. Its function is as follows. Core component of nucleosome. Nucleosomes wrap and compact DNA into chromatin, limiting DNA accessibility to the cellular machineries which require DNA as a template. Histones thereby play a central role in transcription regulation, DNA repair, DNA replication and chromosomal stability. DNA accessibility is regulated via a complex set of post-translational modifications of histones, also called histone code, and nucleosome remodeling. The polypeptide is Histone H2B 1/2 (Danio rerio (Zebrafish)).